Here is a 499-residue protein sequence, read N- to C-terminus: Putative alpha-galactosidase 8 (499 aa).

2 N-linked (GlcNAc...) asparagine glycosylation sites follow: asparagine 154 and asparagine 191. Aspartate 238 functions as the Nucleophile in the catalytic mechanism. Residue asparagine 256 is glycosylated (N-linked (GlcNAc...) asparagine). Catalysis depends on aspartate 303, which acts as the Proton donor.

The protein belongs to the glycosyl hydrolase 27 family.

Its subcellular location is the secreted. It catalyses the reaction Hydrolysis of terminal, non-reducing alpha-D-galactose residues in alpha-D-galactosides, including galactose oligosaccharides, galactomannans and galactolipids.. Functionally, putative alpha-galactosidase involved in the degradation of simple oligosaccharides like melibiose, raffinose and stachyose, and of polymeric galacto(gluco)mannans. This chain is Putative alpha-galactosidase 8 (agl8), found in Emericella nidulans (strain FGSC A4 / ATCC 38163 / CBS 112.46 / NRRL 194 / M139) (Aspergillus nidulans).